A 79-amino-acid chain; its full sequence is Small ribosomal subunit protein bS18B (79 aa).

The segment covering 1–11 (MPRPRKADRTP) has biased composition (basic and acidic residues). Positions 1–24 (MPRPRKADRTPARQRPNPLDRDGV) are disordered.

The protein belongs to the bacterial ribosomal protein bS18 family. In terms of assembly, part of the 30S ribosomal subunit. Forms a tight heterodimer with protein bS6.

Binds as a heterodimer with protein bS6 to the central domain of the 16S rRNA, where it helps stabilize the platform of the 30S subunit. The sequence is that of Small ribosomal subunit protein bS18B from Streptomyces coelicolor (strain ATCC BAA-471 / A3(2) / M145).